Reading from the N-terminus, the 729-residue chain is Fatty acid oxidation complex subunit alpha (729 aa).

Positions 1–189 are enoyl-CoA hydratase/isomerase; the sequence is MLYKGDTLYL…KIGLVDGVVK (189 aa). Asp-296 contacts substrate. Residues 311–729 are 3-hydroxyacyl-CoA dehydrogenase; it reads ETPKQAAVLG…ARPVGDLKTA (419 aa). NAD(+)-binding positions include Met-324, Asp-343, 400–402, Lys-407, and Ser-429; that span reads VVE. The active-site For 3-hydroxyacyl-CoA dehydrogenase activity is the His-450. Asn-453 is an NAD(+) binding site. The substrate site is built by Asn-500 and Tyr-660. The interval 708–729 is disordered; that stretch reads RHNEPYYPPVEPARPVGDLKTA.

It in the N-terminal section; belongs to the enoyl-CoA hydratase/isomerase family. This sequence in the C-terminal section; belongs to the 3-hydroxyacyl-CoA dehydrogenase family. In terms of assembly, heterotetramer of two alpha chains (FadB) and two beta chains (FadA).

It carries out the reaction a (3S)-3-hydroxyacyl-CoA + NAD(+) = a 3-oxoacyl-CoA + NADH + H(+). It catalyses the reaction a (3S)-3-hydroxyacyl-CoA = a (2E)-enoyl-CoA + H2O. The enzyme catalyses a 4-saturated-(3S)-3-hydroxyacyl-CoA = a (3E)-enoyl-CoA + H2O. The catalysed reaction is (3S)-3-hydroxybutanoyl-CoA = (3R)-3-hydroxybutanoyl-CoA. It carries out the reaction a (3Z)-enoyl-CoA = a 4-saturated (2E)-enoyl-CoA. It catalyses the reaction a (3E)-enoyl-CoA = a 4-saturated (2E)-enoyl-CoA. It participates in lipid metabolism; fatty acid beta-oxidation. Involved in the aerobic and anaerobic degradation of long-chain fatty acids via beta-oxidation cycle. Catalyzes the formation of 3-oxoacyl-CoA from enoyl-CoA via L-3-hydroxyacyl-CoA. It can also use D-3-hydroxyacyl-CoA and cis-3-enoyl-CoA as substrate. The protein is Fatty acid oxidation complex subunit alpha of Escherichia coli (strain SMS-3-5 / SECEC).